Consider the following 234-residue polypeptide: 7-cyano-7-deazaguanine synthase (234 aa).

13–23 (FSGGIDSTTCL) contributes to the ATP binding site. Zn(2+) is bound by residues cysteine 197, cysteine 207, cysteine 210, and cysteine 213.

The protein belongs to the QueC family. Zn(2+) is required as a cofactor.

It catalyses the reaction 7-carboxy-7-deazaguanine + NH4(+) + ATP = 7-cyano-7-deazaguanine + ADP + phosphate + H2O + H(+). It participates in purine metabolism; 7-cyano-7-deazaguanine biosynthesis. Functionally, catalyzes the ATP-dependent conversion of 7-carboxy-7-deazaguanine (CDG) to 7-cyano-7-deazaguanine (preQ(0)). In Syntrophobacter fumaroxidans (strain DSM 10017 / MPOB), this protein is 7-cyano-7-deazaguanine synthase.